A 442-amino-acid chain; its full sequence is Capsid vertex component 1 (442 aa).

Belongs to the herpesviridae CVC1 protein family. As to quaternary structure, interacts (via C-terminus) with capsid vertex component 2/CVC2.

It is found in the virion. The protein resides in the host nucleus. Functionally, capsid vertex-specific component that plays a role during viral DNA encapsidation, assuring correct genome cleavage and presumably stabilizing capsids that contain full-length viral genomes. The chain is Capsid vertex component 1 from Human herpesvirus 6A (strain Uganda-1102) (HHV-6 variant A).